A 361-amino-acid chain; its full sequence is Chorismate synthase (361 aa).

2 residues coordinate NADP(+): R48 and R54. FMN is bound by residues 125 to 127 (RSS), 238 to 239 (NA), G278, 293 to 297 (KPTSS), and R319.

It belongs to the chorismate synthase family. Homotetramer. The cofactor is FMNH2.

The enzyme catalyses 5-O-(1-carboxyvinyl)-3-phosphoshikimate = chorismate + phosphate. It functions in the pathway metabolic intermediate biosynthesis; chorismate biosynthesis; chorismate from D-erythrose 4-phosphate and phosphoenolpyruvate: step 7/7. In terms of biological role, catalyzes the anti-1,4-elimination of the C-3 phosphate and the C-6 proR hydrogen from 5-enolpyruvylshikimate-3-phosphate (EPSP) to yield chorismate, which is the branch point compound that serves as the starting substrate for the three terminal pathways of aromatic amino acid biosynthesis. This reaction introduces a second double bond into the aromatic ring system. The chain is Chorismate synthase from Escherichia coli O139:H28 (strain E24377A / ETEC).